The chain runs to 215 residues: 23.2 kDa heat shock protein (215 aa).

Positions 1 to 27 are cleaved as a signal peptide; it reads MASMRTAAAAAMLACIAVVLASTAADG. One can recognise a sHSP domain in the interval 69–189; that stretch reads DVAMLSMARV…GPRVVGIASA (121 aa). The interval 183-215 is disordered; sequence VVGIASAGGDDGGKKSIGGAGEGQNQQAKKVEL. Positions 205–215 are enriched in polar residues; the sequence is GQNQQAKKVEL.

This sequence belongs to the small heat shock protein (HSP20) family. May form oligomeric structures.

The protein resides in the endoplasmic reticulum. This chain is 23.2 kDa heat shock protein (HSP23.2), found in Oryza sativa subsp. japonica (Rice).